The following is a 118-amino-acid chain: Small ribosomal subunit protein mS37 (118 aa).

One can recognise a CHCH domain in the interval 42 to 84 (EATCITEMSMMMACWKQNEFRDEACRKEIQDFFDCSSRAQEAR). 2 consecutive short sequence motifs (cx9C motif) follow at residues 45–55 (CITEMSMMMAC) and 66–76 (CRKEIQDFFDC). Disulfide bonds link C45–C76 and C55–C66. The tract at residues 86 to 105 (MRSIQESLGQSESLSPHKMT) is disordered. A compositionally biased stretch (polar residues) spans 89–99 (IQESLGQSESL).

Belongs to the mitochondrion-specific ribosomal protein mS37 family. As to quaternary structure, component of the mitochondrial ribosome small subunit (28S) which comprises a 12S rRNA and about 30 distinct proteins.

Its subcellular location is the mitochondrion. The protein localises to the nucleus. This Mus musculus (Mouse) protein is Small ribosomal subunit protein mS37 (Chchd1).